The primary structure comprises 397 residues: Enoyl-[acyl-carrier-protein] reductase [NADH] (397 aa).

NAD(+) is bound by residues 48-53 (GASTGY), 74-75 (FE), 111-112 (DA), and 139-140 (LA). Residue Y225 coordinates substrate. The active-site Proton donor is Y235. NAD(+) is bound by residues K244 and 273–275 (VVT).

Belongs to the TER reductase family. Monomer.

The catalysed reaction is a 2,3-saturated acyl-[ACP] + NAD(+) = a (2E)-enoyl-[ACP] + NADH + H(+). The protein operates within lipid metabolism; fatty acid biosynthesis. Involved in the final reduction of the elongation cycle of fatty acid synthesis (FAS II). Catalyzes the reduction of a carbon-carbon double bond in an enoyl moiety that is covalently linked to an acyl carrier protein (ACP). This Pseudoalteromonas translucida (strain TAC 125) protein is Enoyl-[acyl-carrier-protein] reductase [NADH].